The sequence spans 303 residues: Probable alpha-L-glutamate ligase (303 aa).

Residues 104-287 (LQLLAREGID…IAGMMIEFIE (184 aa)) enclose the ATP-grasp domain. ATP-binding positions include Lys-141, 178-179 (EY), Asp-187, and 211-213 (RSN). Mg(2+) contacts are provided by Asp-248, Glu-260, and Asn-262. Asp-248, Glu-260, and Asn-262 together coordinate Mn(2+).

Belongs to the RimK family. Mg(2+) is required as a cofactor. Mn(2+) serves as cofactor.

The chain is Probable alpha-L-glutamate ligase from Pectobacterium carotovorum subsp. carotovorum (strain PC1).